A 237-amino-acid chain; its full sequence is Small ribosomal subunit protein uS17m (237 aa).

Belongs to the universal ribosomal protein uS17 family. Component of the mitochondrial small ribosomal subunit (mt-SSU). Mature yeast 74S mitochondrial ribosomes consist of a small (37S) and a large (54S) subunit. The 37S small subunit contains a 15S ribosomal RNA (15S mt-rRNA) and 34 different proteins. The 54S large subunit contains a 21S rRNA (21S mt-rRNA) and 46 different proteins.

It localises to the mitochondrion. In terms of biological role, component of the mitochondrial ribosome (mitoribosome), a dedicated translation machinery responsible for the synthesis of mitochondrial genome-encoded proteins, including at least some of the essential transmembrane subunits of the mitochondrial respiratory chain. The mitoribosomes are attached to the mitochondrial inner membrane and translation products are cotranslationally integrated into the membrane. uS17m may have a meiosis-specific role as it accumulates during the middle stage of sporulation. The protein is Small ribosomal subunit protein uS17m (MRPS17) of Saccharomyces cerevisiae (strain ATCC 204508 / S288c) (Baker's yeast).